A 338-amino-acid chain; its full sequence is Glyceraldehyde-3-phosphate dehydrogenase (338 aa).

Residues R12–I13, D34, and R79 each bind NAD(+). D-glyceraldehyde 3-phosphate-binding positions include S150–T152, T181, T210–G211, and R233. Catalysis depends on C151, which acts as the Nucleophile. N315 serves as a coordination point for NAD(+).

The protein belongs to the glyceraldehyde-3-phosphate dehydrogenase family. In terms of assembly, homotetramer.

The protein localises to the cytoplasm. It catalyses the reaction D-glyceraldehyde 3-phosphate + phosphate + NAD(+) = (2R)-3-phospho-glyceroyl phosphate + NADH + H(+). It functions in the pathway carbohydrate degradation; glycolysis; pyruvate from D-glyceraldehyde 3-phosphate: step 1/5. The protein is Glyceraldehyde-3-phosphate dehydrogenase (gpd1) of Hypocrea atroviridis (Trichoderma atroviride).